The following is a 305-amino-acid chain: Cytochrome c biogenesis protein CcsA (305 aa).

8 helical membrane passes run 4–24 (VLGLGLFAFALLLLALPLAFW), 32–52 (SGLVTLLIATANLALTAQLVL), 58–78 (GHFPISNLYESLCFLAWACTL), 91–111 (IVAAAATPMGLGCIAFASFAL), 136–156 (VIMVSYAALLVGSLLSVAVLV), 212–232 (TITVGFLLLTVGIISGAVWAN), 246–263 (TWALICWLVYAAYLHTRL), and 275–295 (VASAGLVVIGVCYIGVNLLGI).

Belongs to the CcmF/CycK/Ccl1/NrfE/CcsA family. In terms of assembly, may interact with ccs1.

It localises to the cellular thylakoid membrane. Required during biogenesis of c-type cytochromes (cytochrome c6 and cytochrome f) at the step of heme attachment. The chain is Cytochrome c biogenesis protein CcsA from Synechococcus sp. (strain CC9311).